The sequence spans 1414 residues: Phenyloxazoline synthase MbtB (1414 aa).

The 74-residue stretch at 5 to 78 (TACSEIIRAE…AWSQLVSAGT (74 aa)) folds into the Carrier 1 domain. At S39 the chain carries O-(pantetheine 4'-phosphoryl)serine. The condensation/cyclization stretch occupies residues 96 to 394 (EGEPFPLAPM…SSLLLDVDLT (299 aa)). Residues 579–975 (SYAQLRDQAS…RLPGVHAAAA (397 aa)) are adenylation. Residues 1057-1135 (APRTVLQRAL…ALAQLLTGRE (79 aa)) form the Carrier 2 domain. The residue at position 1094 (S1094) is an O-(pantetheine 4'-phosphoryl)serine. Residues 1188-1413 (GAVLVFPHAG…AVARMVSADV (226 aa)) form a thioesterase region.

The protein belongs to the ATP-dependent AMP-binding enzyme family. MbtB subfamily. The cofactor is pantetheine 4'-phosphate. In terms of processing, 4'-phosphopantetheine is transferred from CoA to a specific serine in each of the two carrier protein domains, leading to their activation from apo to holo forms.

Its pathway is siderophore biosynthesis; mycobactin biosynthesis. In terms of biological role, involved in the initial steps of the mycobactin biosynthetic pathway. Putatively couples activated salicylic acid with serine or threonine and cyclizes this precursor to the hydroxyphenyloxazoline ring system present in this class of siderophores. The protein is Phenyloxazoline synthase MbtB (mbtB) of Mycobacterium bovis (strain ATCC BAA-935 / AF2122/97).